A 167-amino-acid polypeptide reads, in one-letter code: Large ribosomal subunit protein uL15 (167 aa).

The span at 1–10 (MKLNQISDNP) shows a compositional bias: polar residues. The segment at 1-37 (MKLNQISDNPGATKDRMRVGRGIGSGKGKTAGRGVKG) is disordered. Residues 21–35 (RGIGSGKGKTAGRGV) show a composition bias toward gly residues.

This sequence belongs to the universal ribosomal protein uL15 family. In terms of assembly, part of the 50S ribosomal subunit.

Binds to the 23S rRNA. In Methylobacterium radiotolerans (strain ATCC 27329 / DSM 1819 / JCM 2831 / NBRC 15690 / NCIMB 10815 / 0-1), this protein is Large ribosomal subunit protein uL15.